The following is a 150-amino-acid chain: MAKKSVRHIKIREIISSEQIETQDELVKRLNEYDLNVTQATVSRDIKELQLIKVPAPSGQYVYSLPNDRKYHPLEKLGRYLMDSFVNIEGTGNLLVLKTLPGNAQSIGAILDQIDWDEVLGTICGDDTCLLICKDEDASNTIKTRIFNLL.

It belongs to the ArgR family.

It is found in the cytoplasm. Its pathway is amino-acid biosynthesis; L-arginine biosynthesis [regulation]. In terms of biological role, regulates arginine biosynthesis genes. The protein is Arginine repressor of Staphylococcus haemolyticus (strain JCSC1435).